A 204-amino-acid chain; its full sequence is Cytochrome c biogenesis ATP-binding export protein CcmA (204 aa).

An ABC transporter domain is found at 2–202; it reads LEIRNVTCIR…DSNELKKIRL (201 aa). Residue 34–41 coordinates ATP; sequence GQNGAGKT.

The protein belongs to the ABC transporter superfamily. CcmA exporter (TC 3.A.1.107) family. In terms of assembly, the complex is composed of two ATP-binding proteins (CcmA) and two transmembrane proteins (CcmB).

It localises to the cell inner membrane. It carries out the reaction heme b(in) + ATP + H2O = heme b(out) + ADP + phosphate + H(+). Functionally, part of the ABC transporter complex CcmAB involved in the biogenesis of c-type cytochromes; once thought to export heme, this seems not to be the case, but its exact role is uncertain. Responsible for energy coupling to the transport system. This chain is Cytochrome c biogenesis ATP-binding export protein CcmA, found in Aliivibrio fischeri (strain ATCC 700601 / ES114) (Vibrio fischeri).